Here is a 101-residue protein sequence, read N- to C-terminus: Alkene monooxygenase system, effector subunit (101 aa).

This sequence belongs to the TmoD/XamoD family. Monomer. The alkene monooxygenase multicomponent enzyme system is composed of an electron transfer component and a monooxygenase component interacting with the effector protein XamoD. The electron transfer component is composed of a ferredoxin reductase (XamoF) and a ferredoxin (XamoC), and the monooxygenase component is formed by a heterohexamer (dimer of heterotrimers) of two alpha subunits (XamoA), two beta subunits (XamoE) and two gamma subunits (XamoB).

The protein localises to the cytoplasm. Effector component of the alkene monooxygenase multicomponent enzyme system which catalyzes the O2- and NADH-dependent epoxidation of short chain (C2 to C6) alkenes to their corresponding epoxides. One possible role of this small protein might be to facilitate electron transfer between the reductase and ferredoxin components. The polypeptide is Alkene monooxygenase system, effector subunit (Xanthobacter autotrophicus (strain ATCC BAA-1158 / Py2)).